Reading from the N-terminus, the 142-residue chain is Putative pre-16S rRNA nuclease (142 aa).

This sequence belongs to the YqgF nuclease family.

It is found in the cytoplasm. In terms of biological role, could be a nuclease involved in processing of the 5'-end of pre-16S rRNA. In Shouchella clausii (strain KSM-K16) (Alkalihalobacillus clausii), this protein is Putative pre-16S rRNA nuclease.